A 311-amino-acid chain; its full sequence is Probable manganese-dependent inorganic pyrophosphatase (311 aa).

6 residues coordinate Mn(2+): histidine 9, aspartate 13, aspartate 15, aspartate 75, histidine 97, and aspartate 149.

The protein belongs to the PPase class C family. The cofactor is Mn(2+).

It is found in the cytoplasm. The enzyme catalyses diphosphate + H2O = 2 phosphate + H(+). The chain is Probable manganese-dependent inorganic pyrophosphatase from Lactobacillus acidophilus (strain ATCC 700396 / NCK56 / N2 / NCFM).